The primary structure comprises 358 residues: Stearoyl-CoA desaturase 2 (358 aa).

The Cytoplasmic portion of the chain corresponds to 1-71 (MPAHILQEIS…EGPPPKLEYV (71 aa)). Residues 14–43 (SATTTITAPPSGGQQNGGEKFEKNPHHWGA) form a disordered region. Over residues 32–43 (EKFEKNPHHWGA) the composition is skewed to basic and acidic residues. The chain crosses the membrane as a helical span at residues 72–92 (WRNIVLMALLHIGALYGITLV). Asn74 serves as a coordination point for substrate. Residues 93–96 (PSCK) are Lumenal-facing. A helical transmembrane segment spans residues 97–117 (VYTCLFAYLYYVISALGITAG). The Cytoplasmic portion of the chain corresponds to 118-216 (AHRLWSHRTY…EKLVMFQRRY (99 aa)). Fe cation contacts are provided by His119 and His124. Positions 119 to 124 (HRLWSH) match the Histidine box-1 motif. Substrate contacts are provided by Asn147, Arg154, and Asp155. Fe cation contacts are provided by His156, His159, and His160. The Histidine box-2 signature appears at 156-160 (HRAHH). 2 residues coordinate substrate: Arg187 and Lys188. Residues 217–236 (YKPGLLLMCFILPTLVPWYC) traverse the membrane as a helical segment. Topologically, residues 237 to 240 (WGET) are lumenal. The helical transmembrane segment at 241–262 (FVNSLCVSTFLRYAVVLNATWL) threads the bilayer. Trp261 provides a ligand contact to substrate. The Cytoplasmic portion of the chain corresponds to 263–358 (VNSAAHLYGY…RTGEESCKSG (96 aa)). Fe cation-binding residues include His268, His297, His300, and His301. The short motif at 297 to 301 (HNYHH) is the Histidine box-3 element.

Belongs to the fatty acid desaturase type 1 family. Fe(2+) is required as a cofactor. In terms of tissue distribution, detected in brain and adipose tissue, and at much lower levels in testis. Detected in liver when rats are kept on a fat-free diet, but not when their food contains unsaturated fatty acids.

The protein localises to the endoplasmic reticulum membrane. It localises to the microsome membrane. The catalysed reaction is octadecanoyl-CoA + 2 Fe(II)-[cytochrome b5] + O2 + 2 H(+) = (9Z)-octadecenoyl-CoA + 2 Fe(III)-[cytochrome b5] + 2 H2O. It catalyses the reaction hexadecanoyl-CoA + 2 Fe(II)-[cytochrome b5] + O2 + 2 H(+) = (9Z)-hexadecenoyl-CoA + 2 Fe(III)-[cytochrome b5] + 2 H2O. Functionally, stearoyl-CoA desaturase that utilizes O(2) and electrons from reduced cytochrome b5 to introduce the first double bond into saturated fatty acyl-CoA substrates. Catalyzes the insertion of a cis double bond at the delta-9 position into fatty acyl-CoA substrates including palmitoyl-CoA and stearoyl-CoA. Gives rise to a mixture of 16:1 and 18:1 unsaturated fatty acids. Contributes to the biosynthesis of membrane phospholipids, cholesterol esters and triglycerides, especially during embryonic development and in neonates. Important for normal permeability barrier function of the skin in neonates. In Rattus norvegicus (Rat), this protein is Stearoyl-CoA desaturase 2 (Scd2).